Consider the following 257-residue polypeptide: UPF0246 protein lpl1317 (257 aa).

The protein belongs to the UPF0246 family.

The chain is UPF0246 protein lpl1317 from Legionella pneumophila (strain Lens).